The primary structure comprises 250 residues: Aquaporin TIP2-2 (250 aa).

2 helical membrane-spanning segments follow: residues 22-42 and 54-74; these read VAEF…AIAF and AGLV…VSVA. The NPA 1 motif lies at 83 to 85; sequence NPA. The next 3 helical transmembrane spans lie at 97–119, 142–162, and 169–189; these read TVLT…CLLL, GVVF…ATAA, and LGTI…LAAG. An NPA 2 motif is present at residues 197-199; the sequence is NPA. Residues 218–238 form a helical membrane-spanning segment; the sequence is WVGPLIGGGLAGLVYGDVFIG.

The protein belongs to the MIP/aquaporin (TC 1.A.8) family. TIP (TC 1.A.8.10) subfamily.

It is found in the vacuole membrane. Its function is as follows. Aquaporins facilitate the transport of water and small neutral solutes across cell membranes. In Zea mays (Maize), this protein is Aquaporin TIP2-2 (TIP2-2).